Reading from the N-terminus, the 355-residue chain is MSVLGELDLLGPRAHGAACGEAVLKAVAEDFQVDEVLEIPLSGEGEHLWLWVEKRGLNTEEAARRLGRAAGVQQKNVSYAGLKDRQALTRQWFSLHLPGKADPDLGAAEGADLRILRCTRHSRKLQRGAHAANGFTLRLTGLRAERAPLDARLERIAADGVPNYFGLQRFGHGGGNLVDARSCAEQDLLPANRNLRSRFLSAGRSYLFNRLLAERVAEGSWNRAAVGDLLAFTDSRSFFLAGEEECRDARLAALDLHPTGPLWGEGDPPSGAGVLDRELALAGREPALCRWLAKAGMAHERRILRLPIQGLAWHYPEPDVLQLEFVLPAGCFATVVVREILDLVPTGQTENPCAY.

The active-site Nucleophile is the Asp84. A TRUD domain is found at 160 to 306 (GVPNYFGLQR…MAHERRILRL (147 aa)).

It belongs to the pseudouridine synthase TruD family.

The catalysed reaction is uridine(13) in tRNA = pseudouridine(13) in tRNA. Functionally, responsible for synthesis of pseudouridine from uracil-13 in transfer RNAs. This is tRNA pseudouridine synthase D from Pseudomonas aeruginosa (strain ATCC 15692 / DSM 22644 / CIP 104116 / JCM 14847 / LMG 12228 / 1C / PRS 101 / PAO1).